The following is a 528-amino-acid chain: Membrane protein insertase YidC (528 aa).

Transmembrane regions (helical) follow at residues 13 to 33 (ILLA…FFIP), 336 to 356 (WGWA…PLTY), 406 to 426 (LPIL…LNAI), 446 to 466 (YFIL…ITPM), and 481 to 501 (PVIF…YWFV).

Belongs to the OXA1/ALB3/YidC family. Type 1 subfamily. As to quaternary structure, interacts with the Sec translocase complex via SecD. Specifically interacts with transmembrane segments of nascent integral membrane proteins during membrane integration.

Its subcellular location is the cell inner membrane. In terms of biological role, required for the insertion and/or proper folding and/or complex formation of integral membrane proteins into the membrane. Involved in integration of membrane proteins that insert both dependently and independently of the Sec translocase complex, as well as at least some lipoproteins. Aids folding of multispanning membrane proteins. The chain is Membrane protein insertase YidC from Campylobacter jejuni subsp. jejuni serotype O:2 (strain ATCC 700819 / NCTC 11168).